We begin with the raw amino-acid sequence, 88 residues long: MATKKSGGSSGNGRDSRGRRLGVKKFGSEKVIPGNIIIRQRGTKYHPGKNVGMGKDHTIFSKISGFVHFRKGVFNKTFVDVLEISSVS.

A disordered region spans residues 1–24 (MATKKSGGSSGNGRDSRGRRLGVK).

The protein belongs to the bacterial ribosomal protein bL27 family.

The protein is Large ribosomal subunit protein bL27 of Ehrlichia canis (strain Jake).